Here is a 229-residue protein sequence, read N- to C-terminus: ATP synthase subunit a 1 (229 aa).

The next 6 helical transmembrane spans lie at 25–45, 86–106, 111–131, 142–162, 181–201, and 202–222; these read ADAV…SFLA, VATV…PGFF, NINT…VVGI, FCGP…IGHL, LVLI…MMLM, and GVLV…IYIQ.

This sequence belongs to the ATPase A chain family. In terms of assembly, F-type ATPases have 2 components, CF(1) - the catalytic core - and CF(0) - the membrane proton channel. CF(1) has five subunits: alpha(3), beta(3), gamma(1), delta(1), epsilon(1). CF(0) has three main subunits: a(1), b(2) and c(9-12). The alpha and beta chains form an alternating ring which encloses part of the gamma chain. CF(1) is attached to CF(0) by a central stalk formed by the gamma and epsilon chains, while a peripheral stalk is formed by the delta and b chains.

The protein resides in the cell inner membrane. Functionally, key component of the proton channel; it plays a direct role in the translocation of protons across the membrane. This is ATP synthase subunit a 1 from Pelobacter propionicus (strain DSM 2379 / NBRC 103807 / OttBd1).